Consider the following 172-residue polypeptide: Adenine phosphoribosyltransferase (172 aa).

The protein belongs to the purine/pyrimidine phosphoribosyltransferase family. In terms of assembly, homodimer.

Its subcellular location is the cytoplasm. The enzyme catalyses AMP + diphosphate = 5-phospho-alpha-D-ribose 1-diphosphate + adenine. It participates in purine metabolism; AMP biosynthesis via salvage pathway; AMP from adenine: step 1/1. In terms of biological role, catalyzes a salvage reaction resulting in the formation of AMP, that is energically less costly than de novo synthesis. In Staphylococcus epidermidis (strain ATCC 35984 / DSM 28319 / BCRC 17069 / CCUG 31568 / BM 3577 / RP62A), this protein is Adenine phosphoribosyltransferase.